We begin with the raw amino-acid sequence, 331 residues long: Vitamin B12 import system permease protein BtuC (331 aa).

Helical transmembrane passes span 20 to 42, 62 to 84, 91 to 113, 117 to 136, 148 to 170, 190 to 209, 240 to 262, 277 to 299, and 306 to 325; these read LLIG…WLSP, LLAA…VLLG, GVVG…FPSL, VAFM…LLVV, LLLV…FYFS, SWYQ…WLVL, LAIA…VGLV, LLLP…IARL, and LPLG…WMLV.

This sequence belongs to the binding-protein-dependent transport system permease family. FecCD subfamily. In terms of assembly, the complex is composed of two ATP-binding proteins (BtuD), two transmembrane proteins (BtuC) and a solute-binding protein (BtuF).

The protein localises to the cell inner membrane. In terms of biological role, part of the ABC transporter complex BtuCDF involved in vitamin B12 import. Involved in the translocation of the substrate across the membrane. The protein is Vitamin B12 import system permease protein BtuC of Vibrio cholerae serotype O1 (strain ATCC 39315 / El Tor Inaba N16961).